A 130-amino-acid polypeptide reads, in one-letter code: MSLMDPLADALTNIRNNELQVKDSCVISPASKLIGEVLSTMQKENYIGNFEYIDDNRAGQFKVELEGNINKCGVIKPRHAVKKDEFEKFEKRYLPAKNFGILIVTTPEGIMTHYEAKERGIGGRLLAYMY.

It belongs to the universal ribosomal protein uS8 family. In terms of assembly, part of the 30S ribosomal subunit.

One of the primary rRNA binding proteins, it binds directly to 16S rRNA central domain where it helps coordinate assembly of the platform of the 30S subunit. The sequence is that of Small ribosomal subunit protein uS8 from Methanobrevibacter smithii (strain ATCC 35061 / DSM 861 / OCM 144 / PS).